Consider the following 434-residue polypeptide: Zinc finger CCCH domain-containing protein 10 (434 aa).

The interval 1–37 is disordered; the sequence is MPDRDSYANGTGSSGGGPGGGGSEEASGAGVGSGGAS. A compositionally biased stretch (gly residues) spans 12-35; that stretch reads GSSGGGPGGGGSEEASGAGVGSGG. 3 consecutive C3H1-type zinc fingers follow at residues 36-63, 73-99, and 134-161; these read ASSD…HPDM, KNEF…HGSK, and KEEV…HLQR. Omega-N-methylarginine is present on residues Arg-185 and Arg-186. The segment covering 196–207 has biased composition (basic and acidic residues); sequence PDRGFEDHEPGP. A disordered region spans residues 196–217; that stretch reads PDRGFEDHEPGPKRRRGGCCPP. The stretch at 234–280 forms a coiled coil; that stretch reads GVECRLLEEENAMLRKRVEELKKQVSNLLATNEVLLEQNAQFRNQAK. A compositionally biased stretch (polar residues) spans 314 to 330; sequence TTLSSQALQPRPVSQQE. The tract at residues 314 to 362 is disordered; it reads TTLSSQALQPRPVSQQELVAPAGAPAAPPTNAAPPAAPPPPPPHLTPEI. The segment covering 339–358 has biased composition (pro residues); sequence AAPPTNAAPPAAPPPPPPHL.

It localises to the nucleus. In terms of biological role, specific regulator of miRNA biogenesis. Binds, via the C3H1-type zinc finger domains, to the binding motif 5'-GCAGCGC-3' on microRNA pri-MIR143 and negatively regulates the processing to mature microRNA. The sequence is that of Zinc finger CCCH domain-containing protein 10 (ZC3H10) from Homo sapiens (Human).